Here is a 248-residue protein sequence, read N- to C-terminus: 2,3-bisphosphoglycerate-dependent phosphoglycerate mutase (248 aa).

Residues 8 to 15, 21 to 22, arginine 60, 87 to 90, lysine 98, 114 to 115, and 183 to 184 contribute to the substrate site; these read RHGESLWN, TG, EKHY, RR, and GN. Histidine 9 acts as the Tele-phosphohistidine intermediate in catalysis. Glutamate 87 serves as the catalytic Proton donor/acceptor.

The protein belongs to the phosphoglycerate mutase family. BPG-dependent PGAM subfamily.

The enzyme catalyses (2R)-2-phosphoglycerate = (2R)-3-phosphoglycerate. Its pathway is carbohydrate degradation; glycolysis; pyruvate from D-glyceraldehyde 3-phosphate: step 3/5. Functionally, catalyzes the interconversion of 2-phosphoglycerate and 3-phosphoglycerate. The polypeptide is 2,3-bisphosphoglycerate-dependent phosphoglycerate mutase (Porphyromonas gingivalis (strain ATCC 33277 / DSM 20709 / CIP 103683 / JCM 12257 / NCTC 11834 / 2561)).